A 335-amino-acid chain; its full sequence is Glyceraldehyde-3-phosphate dehydrogenase (335 aa).

NAD(+) is bound by residues 13 to 14 and glycine 111; that span reads TI. D-glyceraldehyde 3-phosphate is bound at residue 140 to 142; that stretch reads SCN. Cysteine 141 functions as the Nucleophile in the catalytic mechanism. Arginine 169 contributes to the NAD(+) binding site. D-glyceraldehyde 3-phosphate-binding positions include threonine 171 and 195-196; that span reads HG. An NAD(+)-binding site is contributed by glutamine 300.

The protein belongs to the glyceraldehyde-3-phosphate dehydrogenase family. As to quaternary structure, homotetramer.

The protein resides in the cytoplasm. The enzyme catalyses D-glyceraldehyde 3-phosphate + phosphate + NADP(+) = (2R)-3-phospho-glyceroyl phosphate + NADPH + H(+). It carries out the reaction D-glyceraldehyde 3-phosphate + phosphate + NAD(+) = (2R)-3-phospho-glyceroyl phosphate + NADH + H(+). Its pathway is carbohydrate degradation; glycolysis; pyruvate from D-glyceraldehyde 3-phosphate: step 1/5. This Methanosarcina mazei (strain ATCC BAA-159 / DSM 3647 / Goe1 / Go1 / JCM 11833 / OCM 88) (Methanosarcina frisia) protein is Glyceraldehyde-3-phosphate dehydrogenase.